Reading from the N-terminus, the 617-residue chain is Membrane protein insertase YidC (617 aa).

Residues 8–28 (MFVAIGLSLLVLLGWQYFVAG) form a helical membrane-spanning segment. Over residues 36-49 (QIEAQNKAAQQQPP) the composition is skewed to polar residues. The disordered stretch occupies residues 36–91 (QIEAQNKAAQQQPPGVTPDGVPSPSPKEGGPAAPAPGTLPTAQGGPVSREAALARS). Low complexity predominate over residues 61–81 (PKEGGPAAPAPGTLPTAQGGP). 4 helical membrane-spanning segments follow: residues 387 to 407 (LFGN…LLFL), 461 to 481 (WPVL…FITI), 517 to 533 (FVHL…TMFV), and 549 to 569 (IFTF…AGLV).

This sequence belongs to the OXA1/ALB3/YidC family. Type 1 subfamily. As to quaternary structure, interacts with the Sec translocase complex via SecD. Specifically interacts with transmembrane segments of nascent integral membrane proteins during membrane integration.

Its subcellular location is the cell inner membrane. Its function is as follows. Required for the insertion and/or proper folding and/or complex formation of integral membrane proteins into the membrane. Involved in integration of membrane proteins that insert both dependently and independently of the Sec translocase complex, as well as at least some lipoproteins. Aids folding of multispanning membrane proteins. The protein is Membrane protein insertase YidC of Methylobacterium radiotolerans (strain ATCC 27329 / DSM 1819 / JCM 2831 / NBRC 15690 / NCIMB 10815 / 0-1).